We begin with the raw amino-acid sequence, 350 residues long: Protein RecA (350 aa).

66–73 (GPESSGKT) contacts ATP.

Belongs to the RecA family.

The protein localises to the cytoplasm. Functionally, can catalyze the hydrolysis of ATP in the presence of single-stranded DNA, the ATP-dependent uptake of single-stranded DNA by duplex DNA, and the ATP-dependent hybridization of homologous single-stranded DNAs. It interacts with LexA causing its activation and leading to its autocatalytic cleavage. The polypeptide is Protein RecA (Dichelobacter nodosus (strain VCS1703A)).